The chain runs to 65 residues: Large ribosomal subunit protein uL29 (65 aa).

Belongs to the universal ribosomal protein uL29 family.

In Lactobacillus helveticus (strain DPC 4571), this protein is Large ribosomal subunit protein uL29.